Reading from the N-terminus, the 240-residue chain is MVRTRELRRGFGDRTVLRGIDLDIARGEFVALLGRSGSGKSTLLRALAELDDAGTGSGELRVPSERAVVFQDSRLLPWARVLDNVILGLSGADAAARGRAALAEVGLAGRERAWPRELSGGEQQRVALARSLVREPELLLADEPFGALDALTRIRMHALLQDLCARHKPAVLLVTHDVDEAVLLADRVLVLQDGRLATDLRIELPRPRRHSAPEFIHARELLLAALGVDLAAPEEEKQAS.

An ABC transporter domain is found at V2–A218. G34–S41 lines the ATP pocket.

The protein belongs to the ABC transporter superfamily. Aliphatic sulfonates importer (TC 3.A.1.17.2) family. As to quaternary structure, the complex is composed of two ATP-binding proteins (SsuB), two transmembrane proteins (SsuC) and a solute-binding protein (SsuA).

It localises to the cell membrane. The enzyme catalyses ATP + H2O + aliphatic sulfonate-[sulfonate-binding protein]Side 1 = ADP + phosphate + aliphatic sulfonateSide 2 + [sulfonate-binding protein]Side 1.. Part of the ABC transporter complex SsuABC involved in aliphatic sulfonates import. Responsible for energy coupling to the transport system. The sequence is that of Aliphatic sulfonates import ATP-binding protein SsuB 2 from Nocardia farcinica (strain IFM 10152).